A 340-amino-acid chain; its full sequence is MEQTLVIQKKKRFGFSQGIGITLLIAIVAKYLAELPFLNIMGQLVIAILIGMVWRAAIGVPHDAIAGTNFASKKLLRFGIILLGMRLNLVDIAKAGPKVLVIAAVVITFTLFVVYGLTKVFKVEKKLGILTACGTAICGAAAVVAIAPQVKAKDDETAVGAAIIAILGTIFTLIYTLLYPVLGFSPYGYGVFSGATLHEIAHVIAAAAPGGSTAVDIAVIVKLTRVTMLVPVAILIGVWFGKSEGSKEKRSWRDLPIPWFIFGFLAMSAVHSLGIIPEVVAGYIVVLAYMLIAMAMAGLGLNVEFKTFRKLGSKAFVAGLIGSVCLSVLGYVLVYALGFM.

Helical transmembrane passes span 13-35 (FGFSQGIGITLLIAIVAKYLAEL), 40-59 (IMGQLVIAILIGMVWRAAIG), 99-118 (VLVIAAVVITFTLFVVYGLT), 128-150 (GILTACGTAICGAAAVVAIAPQV), 157-179 (TAVGAAIIAILGTIFTLIYTLLY), 189-211 (YGVFSGATLHEIAHVIAAAAPGG), 218-240 (AVIVKLTRVTMLVPVAILIGVWF), 255-277 (LPIPWFIFGFLAMSAVHSLGIIP), 279-301 (VVAGYIVVLAYMLIAMAMAGLGL), and 316-338 (FVAGLIGSVCLSVLGYVLVYALG).

The protein belongs to the UPF0324 family.

The protein localises to the cell membrane. The sequence is that of UPF0324 membrane protein BA_5405/GBAA_5405/BAS5024 from Bacillus anthracis.